The sequence spans 351 residues: Ion-translocating oxidoreductase complex subunit D (351 aa).

4 consecutive transmembrane segments (helical) span residues 20–40 (IMLW…YFFG), 44–64 (LIQV…TLSL), 89–109 (LPPL…IIIA), and 123–143 (PAMI…TSWL). Position 187 is an FMN phosphoryl threonine (Thr187). The next 5 helical transmembrane spans lie at 215–235 (LSGI…LFLL), 244–264 (IPVS…IIAP), 267–287 (FAQP…FFIA), 301–321 (LIFG…GGYP), and 322–342 (DGVA…DYYT).

It belongs to the NqrB/RnfD family. As to quaternary structure, the complex is composed of six subunits: RnfA, RnfB, RnfC, RnfD, RnfE and RnfG. FMN serves as cofactor.

It localises to the cell inner membrane. In terms of biological role, part of a membrane-bound complex that couples electron transfer with translocation of ions across the membrane. This chain is Ion-translocating oxidoreductase complex subunit D, found in Pectobacterium atrosepticum (strain SCRI 1043 / ATCC BAA-672) (Erwinia carotovora subsp. atroseptica).